The sequence spans 441 residues: Maltokinase (441 aa).

The protein belongs to the aminoglycoside phosphotransferase family. Monomer.

The enzyme catalyses D-maltose + ATP = alpha-maltose 1-phosphate + ADP + H(+). It functions in the pathway glycan biosynthesis; glycogen biosynthesis. In terms of biological role, catalyzes the ATP-dependent phosphorylation of maltose to maltose 1-phosphate. Is involved in a branched alpha-glucan biosynthetic pathway from trehalose, together with TreS, GlgE and GlgB. In Mycolicibacterium vanbaalenii (strain DSM 7251 / JCM 13017 / BCRC 16820 / KCTC 9966 / NRRL B-24157 / PYR-1) (Mycobacterium vanbaalenii), this protein is Maltokinase (mak).